A 174-amino-acid polypeptide reads, in one-letter code: Protein FanG (174 aa).

Positions 1–21 are cleaved as a signal peptide; sequence MKKLYKAITVICILMSNLQSA. Cysteine 41 and cysteine 75 are joined by a disulfide.

Its subcellular location is the fimbrium. Its function is as follows. Involved in the biosynthesis of K99 fimbriae. This is Protein FanG (fanG) from Escherichia coli.